The following is a 241-amino-acid chain: MAASGEARRVLVYGGRGALGSRCVQAFRARNWWVASIDVVENEEASASVIVKMTDSFTEQADQVTAEVGKLLGDQKVDAILCVAGGWAGGNAKSKSLFKNCDLMWKQSIWTSTISSHLATKHLKEGGLLTLAGAKAALDGTPGMIGYGMAKGAVHQLCQSLAGKNSGMPSGAAAIAVLPVTLDTPMNRKSMPEADFSSWTPLEFLVETFHDWITGNKRPNSGSLIQVVTTDGKTELTPAYF.

An NADP(+)-binding site is contributed by 11 to 35 (LVYGGRGALGSRCVQAFRARNWWVA). N6-succinyllysine is present on residues K70, K76, K93, and K99. Y147 (proton acceptor) is an active-site residue. S170 carries the post-translational modification Phosphoserine.

Belongs to the short-chain dehydrogenases/reductases (SDR) family. Homodimer.

It catalyses the reaction 5,6,7,8-tetrahydropteridine + NAD(+) = 6,7-dihydropteridine + NADH + H(+). The enzyme catalyses 5,6,7,8-tetrahydropteridine + NADP(+) = 6,7-dihydropteridine + NADPH + H(+). Catalyzes the conversion of quinonoid dihydrobiopterin into tetrahydrobiopterin. In Rattus norvegicus (Rat), this protein is Dihydropteridine reductase (Qdpr).